The primary structure comprises 620 residues: Glutathione-regulated potassium-efflux system protein KefC (620 aa).

The next 12 membrane-spanning stretches (helical) occupy residues 4 to 24 (HTLL…PIAV), 26 to 46 (LGLG…PWGL), 54 to 74 (SILH…GLEL), 90 to 110 (GALQ…FLGL), 114 to 134 (VAEL…MQAM), 149 to 169 (FAVL…IPLL), 178 to 198 (LGAF…VVLL), 218 to 238 (VFSA…EEVG), 270 to 290 (GLLL…GTLV), 294 to 314 (LRIL…LWLV), 327 to 347 (WFAV…GAAQ), and 359 to 379 (ALTL…MLLT). One can recognise an RCK N-terminal domain in the interval 399–518 (QPRVIVAGFG…AGVAMPERET (120 aa)). The interval 599 to 620 (QGTAEGKHSGEAADEPEVKPSI) is disordered.

This sequence belongs to the monovalent cation:proton antiporter 2 (CPA2) transporter (TC 2.A.37) family. KefC subfamily. In terms of assembly, homodimer. Interacts with the regulatory subunit KefF.

The protein localises to the cell inner membrane. In terms of biological role, pore-forming subunit of a potassium efflux system that confers protection against electrophiles. Catalyzes K(+)/H(+) antiport. The sequence is that of Glutathione-regulated potassium-efflux system protein KefC from Salmonella heidelberg (strain SL476).